We begin with the raw amino-acid sequence, 452 residues long: 51.5 kDa protein (452 aa).

Positions 1-126 constitute a Helicase ATP-binding domain; that stretch reads MIQSPPGSGK…KDTYDYMIEG (126 aa). A Helicase C-terminal domain is found at 177 to 333; sequence DVVQEYVKHA…NIVQAKQCPD (157 aa). A zinc finger spans residues 331–348; sequence CPDCSAMWPLSQKMCNLC.

In terms of biological role, may play a role in either regulating bacteriophages replication or specifying expression of its own genes. This is 51.5 kDa protein from Lactococcus (lactic streptococci).